The sequence spans 251 residues: Octanoyltransferase (251 aa).

One can recognise a BPL/LPL catalytic domain in the interval 56–241 (ADTGDEIWVV…NLDGASAAAD (186 aa)). Residues 96 to 103 (RGGQITYH), 168 to 170 (ALG), and 181 to 183 (GLS) contribute to the substrate site. Residue cysteine 199 is the Acyl-thioester intermediate of the active site.

Belongs to the LipB family.

It is found in the cytoplasm. It carries out the reaction octanoyl-[ACP] + L-lysyl-[protein] = N(6)-octanoyl-L-lysyl-[protein] + holo-[ACP] + H(+). Its pathway is protein modification; protein lipoylation via endogenous pathway; protein N(6)-(lipoyl)lysine from octanoyl-[acyl-carrier-protein]: step 1/2. In terms of biological role, catalyzes the transfer of endogenously produced octanoic acid from octanoyl-acyl-carrier-protein onto the lipoyl domains of lipoate-dependent enzymes. Lipoyl-ACP can also act as a substrate although octanoyl-ACP is likely to be the physiological substrate. In Burkholderia orbicola (strain AU 1054), this protein is Octanoyltransferase.